The primary structure comprises 260 residues: Proteasome subunit alpha (260 aa).

Belongs to the peptidase T1A family. In terms of assembly, the 20S proteasome core is composed of 14 alpha and 14 beta subunits that assemble into four stacked heptameric rings, resulting in a barrel-shaped structure. The two inner rings, each composed of seven catalytic beta subunits, are sandwiched by two outer rings, each composed of seven alpha subunits. The catalytic chamber with the active sites is on the inside of the barrel. Has a gated structure, the ends of the cylinder being occluded by the N-termini of the alpha-subunits. Is capped at one or both ends by the proteasome regulatory ATPase, PAN.

The protein resides in the cytoplasm. Its activity is regulated as follows. The formation of the proteasomal ATPase PAN-20S proteasome complex, via the docking of the C-termini of PAN into the intersubunit pockets in the alpha-rings, triggers opening of the gate for substrate entry. Interconversion between the open-gate and close-gate conformations leads to a dynamic regulation of the 20S proteasome proteolysis activity. In terms of biological role, component of the proteasome core, a large protease complex with broad specificity involved in protein degradation. This chain is Proteasome subunit alpha, found in Pyrococcus abyssi (strain GE5 / Orsay).